Consider the following 405-residue polypeptide: Tyrosine--tRNA ligase (405 aa).

The 'HIGH' region motif lies at 46 to 55 (PTRPDIHLGH). The 'KMSKS' region signature appears at 230–234 (KMSKS). Position 233 (Lys233) interacts with ATP. Positions 341–404 (MGLAALMVKA…GKKKFVKIVV (64 aa)) constitute an S4 RNA-binding domain.

Belongs to the class-I aminoacyl-tRNA synthetase family. TyrS type 2 subfamily. As to quaternary structure, homodimer.

The protein localises to the cytoplasm. The enzyme catalyses tRNA(Tyr) + L-tyrosine + ATP = L-tyrosyl-tRNA(Tyr) + AMP + diphosphate + H(+). Catalyzes the attachment of tyrosine to tRNA(Tyr) in a two-step reaction: tyrosine is first activated by ATP to form Tyr-AMP and then transferred to the acceptor end of tRNA(Tyr). The sequence is that of Tyrosine--tRNA ligase from Bdellovibrio bacteriovorus (strain ATCC 15356 / DSM 50701 / NCIMB 9529 / HD100).